Consider the following 153-residue polypeptide: Putative pre-16S rRNA nuclease (153 aa).

The protein belongs to the YqgF nuclease family.

Its subcellular location is the cytoplasm. In terms of biological role, could be a nuclease involved in processing of the 5'-end of pre-16S rRNA. The chain is Putative pre-16S rRNA nuclease from Chloroflexus aurantiacus (strain ATCC 29366 / DSM 635 / J-10-fl).